The sequence spans 168 residues: MRRGLYVGRFQPFHNGHKAVIDGLAEEVDELIIGIGSADISHDIRHPFTAGERVLMITRALNGLKIPFYVIPLEDVKRNALWVAHVKSMVPPFDTVYTSNPLVIQLFKEAGIPVLSPPMYLRESLSGTAVRKKMYHGEAWEEYVPKEVVSVVGEIHGIERMQQISKSD.

It belongs to the archaeal NMN adenylyltransferase family.

The protein localises to the cytoplasm. The enzyme catalyses beta-nicotinamide D-ribonucleotide + ATP + H(+) = diphosphate + NAD(+). It functions in the pathway cofactor biosynthesis; NAD(+) biosynthesis; NAD(+) from nicotinamide D-ribonucleotide: step 1/1. This chain is Nicotinamide-nucleotide adenylyltransferase, found in Methanocorpusculum labreanum (strain ATCC 43576 / DSM 4855 / Z).